The sequence spans 256 residues: Thiazole synthase (256 aa).

Lysine 95 functions as the Schiff-base intermediate with DXP in the catalytic mechanism. Residues glycine 156, 182 to 183, and 204 to 205 each bind 1-deoxy-D-xylulose 5-phosphate; these read AG and NT.

It belongs to the ThiG family. Homotetramer. Forms heterodimers with either ThiH or ThiS.

It localises to the cytoplasm. It carries out the reaction [ThiS sulfur-carrier protein]-C-terminal-Gly-aminoethanethioate + 2-iminoacetate + 1-deoxy-D-xylulose 5-phosphate = [ThiS sulfur-carrier protein]-C-terminal Gly-Gly + 2-[(2R,5Z)-2-carboxy-4-methylthiazol-5(2H)-ylidene]ethyl phosphate + 2 H2O + H(+). Its pathway is cofactor biosynthesis; thiamine diphosphate biosynthesis. Functionally, catalyzes the rearrangement of 1-deoxy-D-xylulose 5-phosphate (DXP) to produce the thiazole phosphate moiety of thiamine. Sulfur is provided by the thiocarboxylate moiety of the carrier protein ThiS. In vitro, sulfur can be provided by H(2)S. This Salmonella choleraesuis (strain SC-B67) protein is Thiazole synthase.